The primary structure comprises 361 residues: Phospho-N-acetylmuramoyl-pentapeptide-transferase (361 aa).

10 helical membrane-spanning segments follow: residues 28–48 (LAII…IKFL), 74–94 (TMGG…LADL), 99–119 (IWIT…DDYA), 133–153 (SKLL…EYLD), 168–188 (LSLD…VGSS), 203–223 (VPIA…GNLI), 236–256 (TGEL…FLWF), 263–283 (VFMG…ISVI), 288–308 (IVLA…ILQV), and 338–358 (KVVI…LSSL).

The protein belongs to the glycosyltransferase 4 family. MraY subfamily. The cofactor is Mg(2+).

The protein resides in the cell membrane. It carries out the reaction UDP-N-acetyl-alpha-D-muramoyl-L-alanyl-gamma-D-glutamyl-meso-2,6-diaminopimeloyl-D-alanyl-D-alanine + di-trans,octa-cis-undecaprenyl phosphate = di-trans,octa-cis-undecaprenyl diphospho-N-acetyl-alpha-D-muramoyl-L-alanyl-D-glutamyl-meso-2,6-diaminopimeloyl-D-alanyl-D-alanine + UMP. The protein operates within cell wall biogenesis; peptidoglycan biosynthesis. Functionally, catalyzes the initial step of the lipid cycle reactions in the biosynthesis of the cell wall peptidoglycan: transfers peptidoglycan precursor phospho-MurNAc-pentapeptide from UDP-MurNAc-pentapeptide onto the lipid carrier undecaprenyl phosphate, yielding undecaprenyl-pyrophosphoryl-MurNAc-pentapeptide, known as lipid I. This is Phospho-N-acetylmuramoyl-pentapeptide-transferase from Rickettsia montanensis.